A 186-amino-acid polypeptide reads, in one-letter code: MSWRSERIWIELITGSRKTSNFCWAFILFLGSLGFLLVGTSSYLGRNLISLFPSQQIIFFPQGIVMSFYGIAGLFISSYLWCTISWNVGSGYDRFDRKEGIVCIFRWGFPGKNRRIFLRLLMKDIQSIRIAVKEDIYARRILVLYMEIRGQGAIPLTRTDENLTPREMEQKAAELAYFLRVPIEVF.

2 helical membrane-spanning segments follow: residues 22–42 and 57–77; these read FCWAFILFLGSLGFLLVGTSS and IIFFPQGIVMSFYGIAGLFIS.

The protein belongs to the Ycf4 family.

It localises to the plastid. The protein resides in the chloroplast thylakoid membrane. Functionally, seems to be required for the assembly of the photosystem I complex. The sequence is that of Photosystem I assembly protein Ycf4 from Vitis vinifera (Grape).